Here is a 329-residue protein sequence, read N- to C-terminus: Ribose-phosphate pyrophosphokinase B (329 aa).

Residues Asp131, His133, and Glu146 each coordinate Mg(2+). A binding of phosphoribosylpyrophosphate region spans residues Thr227–Lys242.

It belongs to the ribose-phosphate pyrophosphokinase family. Mg(2+) is required as a cofactor.

Its subcellular location is the cytoplasm. It carries out the reaction D-ribose 5-phosphate + ATP = 5-phospho-alpha-D-ribose 1-diphosphate + AMP + H(+). The protein operates within metabolic intermediate biosynthesis; 5-phospho-alpha-D-ribose 1-diphosphate biosynthesis; 5-phospho-alpha-D-ribose 1-diphosphate from D-ribose 5-phosphate (route I): step 1/1. The sequence is that of Ribose-phosphate pyrophosphokinase B (prsB) from Dictyostelium discoideum (Social amoeba).